Consider the following 526-residue polypeptide: L-aspartate oxidase (526 aa).

FAD-binding positions include 17 to 20 (TGVA), K40, 49 to 56 (ATHYAQGG), and D213. R284 (proton donor/acceptor) is an active-site residue. Residues E367 and 383–384 (SL) each bind FAD.

This sequence belongs to the FAD-dependent oxidoreductase 2 family. NadB subfamily. FAD serves as cofactor.

The protein localises to the cytoplasm. The catalysed reaction is L-aspartate + O2 = iminosuccinate + H2O2. It participates in cofactor biosynthesis; NAD(+) biosynthesis; iminoaspartate from L-aspartate (oxidase route): step 1/1. Its function is as follows. Catalyzes the oxidation of L-aspartate to iminoaspartate, the first step in the de novo biosynthesis of NAD(+). The chain is L-aspartate oxidase (nadB) from Mycobacterium leprae (strain TN).